We begin with the raw amino-acid sequence, 394 residues long: Glycerol-1-phosphate dehydrogenase [NAD(P)+] (394 aa).

NAD(+)-binding positions include Asp54, 116-120, and 138-141; these read GTIHD and TAPS. Asp143 serves as a coordination point for substrate. Ser147 is a binding site for NAD(+). Asp190 lines the substrate pocket. 2 residues coordinate Ni(2+): Asp190 and His270. His274 lines the substrate pocket. His290 serves as a coordination point for Ni(2+).

The protein belongs to the glycerol-1-phosphate dehydrogenase family. In terms of assembly, homodimer. Requires Ni(2+) as cofactor.

The protein localises to the cytoplasm. It carries out the reaction sn-glycerol 1-phosphate + NAD(+) = dihydroxyacetone phosphate + NADH + H(+). It catalyses the reaction sn-glycerol 1-phosphate + NADP(+) = dihydroxyacetone phosphate + NADPH + H(+). Its function is as follows. Catalyzes the NAD(P)H-dependent reduction of dihydroxyacetonephosphate (DHAP or glycerone phosphate) to glycerol 1-phosphate (G1P). The G1P thus generated is probably used for the synthesis of phosphoglycerolipids in Gram-positive bacterial species. Prefers NADH over NADPH as coenzyme. Is also able to catalyze the reverse reaction, i.e. the NAD(+)-dependent oxidation of G1P but not of G3P. Does not possess glycerol dehydrogenase activity. The chain is Glycerol-1-phosphate dehydrogenase [NAD(P)+] (egsA) from Bacillus subtilis (strain 168).